Here is a 721-residue protein sequence, read N- to C-terminus: Glucans biosynthesis glucosyltransferase H (721 aa).

7 consecutive transmembrane segments (helical) span residues 54–74 (LIMV…YQVL), 85–105 (VVLV…VSAL), 404–424 (GIGA…GILI), 458–478 (FAGT…LVLI), 493–513 (FGGV…MMVF), 548–568 (YALP…VSWP), and 569–589 (LLLW…VALL).

Belongs to the glycosyltransferase 2 family. OpgH subfamily.

It localises to the cell inner membrane. Its pathway is glycan metabolism; osmoregulated periplasmic glucan (OPG) biosynthesis. Its function is as follows. Involved in the biosynthesis of osmoregulated periplasmic glucans (OPGs). The sequence is that of Glucans biosynthesis glucosyltransferase H from Rhodopseudomonas palustris (strain TIE-1).